The sequence spans 351 residues: Photosystem II D2 protein (351 aa).

The helical transmembrane segment at 39–59 (CAYLAVGGWLTGTTFVTSWYT) threads the bilayer. His116 serves as a coordination point for chlorophyll a. Residues 123–139 (GFCLRQFEIARLVGLRP) traverse the membrane as a helical segment. 2 residues coordinate pheophytin a: Gln128 and Asn141. The helical transmembrane segment at 151 to 164 (VFVSVFLMYPLGQA) threads the bilayer. Position 196 (His196) interacts with chlorophyll a. The helical transmembrane segment at 206-226 (GALLCAIHGATVQNTLFEDGD) threads the bilayer. A plastoquinone-binding residues include His213 and Phe260. His213 contributes to the Fe cation binding site. His267 lines the Fe cation pocket. A helical transmembrane segment spans residues 277 to 293 (GLWTSAFGIVGLALNLR).

It belongs to the reaction center PufL/M/PsbA/D family. PSII is composed of 1 copy each of membrane proteins PsbA, PsbB, PsbC, PsbD, PsbE, PsbF, PsbH, PsbI, PsbJ, PsbK, PsbL, PsbM, PsbT, PsbX, PsbY, PsbZ, Psb30/Ycf12, at least 3 peripheral proteins of the oxygen-evolving complex and a large number of cofactors. It forms dimeric complexes. The D1/D2 heterodimer binds P680, chlorophylls that are the primary electron donor of PSII, and subsequent electron acceptors. It shares a non-heme iron and each subunit binds pheophytin, quinone, additional chlorophylls, carotenoids and lipids. There is also a Cl(-1) ion associated with D1 and D2, which is required for oxygen evolution. The PSII complex binds additional chlorophylls, carotenoids and specific lipids. is required as a cofactor.

The protein localises to the plastid. The protein resides in the chloroplast thylakoid membrane. The catalysed reaction is 2 a plastoquinone + 4 hnu + 2 H2O = 2 a plastoquinol + O2. In terms of biological role, photosystem II (PSII) is a light-driven water:plastoquinone oxidoreductase that uses light energy to abstract electrons from H(2)O, generating O(2) and a proton gradient subsequently used for ATP formation. It consists of a core antenna complex that captures photons, and an electron transfer chain that converts photonic excitation into a charge separation. The D1/D2 (PsbA/PsbD) reaction center heterodimer binds P680, the primary electron donor of PSII as well as several subsequent electron acceptors. D2 is needed for assembly of a stable PSII complex. In Pyropia yezoensis (Susabi-nori), this protein is Photosystem II D2 protein.